We begin with the raw amino-acid sequence, 144 residues long: Methylglyoxal synthase (144 aa).

The 144-residue stretch at 1 to 144 (MNIALIAHDE…EEEQRKFLTD (144 aa)) folds into the MGS-like domain. Substrate contacts are provided by residues H8, K12, 34 to 37 (TGTT), and 54 to 55 (SG). D60 serves as the catalytic Proton donor/acceptor. Residue H87 coordinates substrate.

It belongs to the methylglyoxal synthase family.

The catalysed reaction is dihydroxyacetone phosphate = methylglyoxal + phosphate. Its function is as follows. Catalyzes the formation of methylglyoxal from dihydroxyacetone phosphate. This Exiguobacterium sibiricum (strain DSM 17290 / CCUG 55495 / CIP 109462 / JCM 13490 / 255-15) protein is Methylglyoxal synthase.